The sequence spans 249 residues: Chymase (249 aa).

The N-terminal stretch at 1–19 (MHCLPLTLLLLLLCSRAEA) is a signal peptide. The propeptide at 20 to 21 (EE) is activation peptide. The region spanning 22-245 (IIGGTESKPH…YRPWINKVLK (224 aa)) is the Peptidase S1 domain. Cys-51 and Cys-67 form a disulfide bridge. Residues His-66 and Asp-110 each act as charge relay system in the active site. 2 disulfide bridges follow: Cys-144/Cys-209 and Cys-175/Cys-188. Ser-203 functions as the Charge relay system in the catalytic mechanism.

Belongs to the peptidase S1 family. Granzyme subfamily.

The protein resides in the secreted. It is found in the cytoplasmic granule. The catalysed reaction is Preferential cleavage: Phe-|-Xaa &gt; Tyr-|-Xaa &gt; Trp-|-Xaa &gt; Leu-|-Xaa.. In terms of biological role, major secreted protease of mast cells with suspected roles in vasoactive peptide generation, extracellular matrix degradation, and regulation of gland secretion. This Canis lupus familiaris (Dog) protein is Chymase (CMA1).